The primary structure comprises 428 residues: Gamma-glutamyl phosphate reductase (428 aa).

It belongs to the gamma-glutamyl phosphate reductase family.

Its subcellular location is the cytoplasm. It catalyses the reaction L-glutamate 5-semialdehyde + phosphate + NADP(+) = L-glutamyl 5-phosphate + NADPH + H(+). It functions in the pathway amino-acid biosynthesis; L-proline biosynthesis; L-glutamate 5-semialdehyde from L-glutamate: step 2/2. In terms of biological role, catalyzes the NADPH-dependent reduction of L-glutamate 5-phosphate into L-glutamate 5-semialdehyde and phosphate. The product spontaneously undergoes cyclization to form 1-pyrroline-5-carboxylate. This Hyphomonas neptunium (strain ATCC 15444) protein is Gamma-glutamyl phosphate reductase.